The chain runs to 1331 residues: ABC multidrug transporter MDR2 (1331 aa).

The tract at residues Met1–Pro50 is disordered. Over residues Ser31 to Asn41 the composition is skewed to basic and acidic residues. 4 consecutive transmembrane segments (helical) span residues Met93 to Phe113, Tyr147 to Ile167, Lys219 to Val239, and Trp242 to Ile262. Residues Ala97 to Ser387 enclose the ABC transmembrane type-1 1 domain. Residue Asn293 is glycosylated (N-linked (GlcNAc...) asparagine). Helical transmembrane passes span Leu325–Trp345 and Leu358–Val378. In terms of domain architecture, ABC transporter 1 spans Ile422–Ala667. An ATP-binding site is contributed by Gly457 to Ser464. Residue Asn529 is glycosylated (N-linked (GlcNAc...) asparagine). 2 helical membrane-spanning segments follow: residues Leu762 to Phe782 and Leu808 to Phe828. One can recognise an ABC transmembrane type-1 2 domain in the interval Gly764–Lys1051. Asn860 is a glycosylation site (N-linked (GlcNAc...) asparagine). 4 helical membrane-spanning segments follow: residues Leu884 to Phe904, Leu910 to Leu930, Ala995 to Leu1015, and Phe1025 to Phe1045. The region spanning Ile1086 to Met1324 is the ABC transporter 2 domain. Asn1108 carries an N-linked (GlcNAc...) asparagine glycan. An ATP-binding site is contributed by Gly1121–Ser1128.

This sequence belongs to the ABC transporter superfamily. ABCB family. Multidrug resistance exporter (TC 3.A.1.201) subfamily.

The protein resides in the cell membrane. It carries out the reaction itraconazole(in) + ATP + H2O = itraconazole(out) + ADP + phosphate + H(+). Functionally, ABC-type efflux transporter involved in the modulation susceptibility to itraconazole. In Trichophyton rubrum (strain ATCC MYA-4607 / CBS 118892) (Athlete's foot fungus), this protein is ABC multidrug transporter MDR2.